We begin with the raw amino-acid sequence, 460 residues long: tRNA modification GTPase MnmE (460 aa).

Positions 24, 81, and 121 each coordinate (6S)-5-formyl-5,6,7,8-tetrahydrofolate. The region spanning 218-385 is the TrmE-type G domain; the sequence is GMVVAIAGPP…LIAAIEDFAA (168 aa). Residues 228–233, 247–253, and 272–275 contribute to the GTP site; these read NVGKST, SPHAGTT, and DTAG. Mg(2+)-binding residues include Ser-232 and Thr-253. Position 460 (Lys-460) interacts with (6S)-5-formyl-5,6,7,8-tetrahydrofolate.

Belongs to the TRAFAC class TrmE-Era-EngA-EngB-Septin-like GTPase superfamily. TrmE GTPase family. As to quaternary structure, homodimer. Heterotetramer of two MnmE and two MnmG subunits. K(+) serves as cofactor.

The protein localises to the cytoplasm. Its function is as follows. Exhibits a very high intrinsic GTPase hydrolysis rate. Involved in the addition of a carboxymethylaminomethyl (cmnm) group at the wobble position (U34) of certain tRNAs, forming tRNA-cmnm(5)s(2)U34. This Rhodopseudomonas palustris (strain BisB5) protein is tRNA modification GTPase MnmE.